A 420-amino-acid chain; its full sequence is Putative kinase Y4mE (420 aa).

D302 functions as the Proton acceptor in the catalytic mechanism.

The protein belongs to the HipA Ser/Thr kinase family.

This is Putative kinase Y4mE from Sinorhizobium fredii (strain NBRC 101917 / NGR234).